Reading from the N-terminus, the 57-residue chain is Large ribosomal subunit protein bL32 (57 aa).

It belongs to the bacterial ribosomal protein bL32 family.

This is Large ribosomal subunit protein bL32 from Ureaplasma parvum serovar 3 (strain ATCC 27815 / 27 / NCTC 11736).